The primary structure comprises 562 residues: Adenylate kinase isoenzyme 5 (562 aa).

2 adenylate kinase regions span residues lysine 133–aspartate 316 and lysine 377–aspartate 559. ATP is bound at residue glycine 142–threonine 147. Positions serine 162–alanine 193 are NMP 1. AMP contacts are provided by residues arginine 168, glutamate 191–alanine 193, glycine 219–arginine 222, and glutamine 226. Residues lysine 256 to aspartate 266 form an LID 1 region. Residue arginine 257 coordinates ATP. Residues arginine 263 and arginine 274 each coordinate AMP. ATP is bound at residue glycine 386–threonine 391. An NMP 2 region spans residues serine 406–valine 435. Residues threonine 407, arginine 412, aspartate 433–valine 435, glycine 462–arginine 465, and glutamine 469 contribute to the AMP site. The LID 2 stretch occupies residues glutamine 499–aspartate 509. ATP is bound at residue arginine 500. Residue arginine 517 participates in AMP binding. Glycine 545 provides a ligand contact to ATP.

This sequence belongs to the adenylate kinase family. In terms of assembly, monomer. Interacts with YWHAZ. In terms of tissue distribution, brain specific.

It is found in the cytoplasm. The enzyme catalyses AMP + ATP = 2 ADP. It carries out the reaction a 2'-deoxyribonucleoside 5'-diphosphate + ATP = a 2'-deoxyribonucleoside 5'-triphosphate + ADP. It catalyses the reaction a ribonucleoside 5'-diphosphate + ATP = a ribonucleoside 5'-triphosphate + ADP. Functionally, nucleoside monophosphate (NMP) kinase that catalyzes the reversible transfer of the terminal phosphate group between nucleoside triphosphates and monophosphates. Active on AMP and dAMP with ATP as a donor. When GTP is used as phosphate donor, the enzyme phosphorylates AMP, CMP, and to a small extent dCMP. Also displays broad nucleoside diphosphate kinase activity. This is Adenylate kinase isoenzyme 5 (AK5) from Homo sapiens (Human).